A 69-amino-acid polypeptide reads, in one-letter code: Conotoxin Lt5.7 (69 aa).

The signal sequence occupies residues 1 to 19 (MLCLPVFIILLLLASPAAP). Residues 20–54 (KSLETRIQNDLIRAGLTDADLKTEKGFLSGLLNVA) constitute a propeptide that is removed on maturation.

This sequence belongs to the conotoxin T superfamily. Post-translationally, contains 2 disulfide bonds that can be either 'C1-C3, C2-C4' or 'C1-C4, C2-C3', since these disulfide connectivities have been observed for conotoxins with cysteine framework V (for examples, see AC P0DQQ7 and AC P81755). As to expression, expressed by the venom duct.

It localises to the secreted. The chain is Conotoxin Lt5.7 from Conus litteratus (Lettered cone).